An 809-amino-acid polypeptide reads, in one-letter code: Phospholipase D alpha 1 (809 aa).

A C2 domain is found at 1 to 125 (MAQILLHGTL…LDGHEIDKWV (125 aa)). Aspartate 186 is a Ca(2+) binding site. Residues 326–365 (TMFTHHQKIVVVDSALPGGGGSDKRRIVSFVGGLDLCDGR) enclose the PLD phosphodiesterase 1 domain. Active-site residues include histidine 331, lysine 333, and aspartate 338. Histidine 331 serves as a coordination point for a 1,2-diacyl-sn-glycero-3-phosphate. Ca(2+)-binding residues include histidine 371 and histidine 405. Residues glutamine 521 and histidine 660 each contribute to the a 1,2-diacyl-sn-glycero-3-phosphate site. The region spanning 655–682 (FMIYVHTKMMIVDDEYIIIGSANINQRS) is the PLD phosphodiesterase 2 domain. Catalysis depends on residues histidine 660, lysine 662, and aspartate 667. Glutamate 721 lines the Ca(2+) pocket.

Belongs to the phospholipase D family. C2-PLD subfamily. Ca(2+) is required as a cofactor.

It catalyses the reaction a 1,2-diacyl-sn-glycero-3-phosphocholine + H2O = a 1,2-diacyl-sn-glycero-3-phosphate + choline + H(+). Hydrolyzes glycerol-phospholipids at the terminal phosphodiesteric bond. Plays an important role in various cellular processes. The sequence is that of Phospholipase D alpha 1 (PLD1) from Vigna unguiculata (Cowpea).